A 53-amino-acid chain; its full sequence is Ribulose bisphosphate carboxylase large chain (53 aa).

The propeptide occupies 1–2 (MS). The residue at position 3 (Pro-3) is an N-acetylproline. Lys-14 carries the post-translational modification N6,N6,N6-trimethyllysine.

This sequence belongs to the RuBisCO large chain family. Type I subfamily. Heterohexadecamer of 8 large chains and 8 small chains.

Its subcellular location is the plastid. The protein resides in the chloroplast. The catalysed reaction is 2 (2R)-3-phosphoglycerate + 2 H(+) = D-ribulose 1,5-bisphosphate + CO2 + H2O. It carries out the reaction D-ribulose 1,5-bisphosphate + O2 = 2-phosphoglycolate + (2R)-3-phosphoglycerate + 2 H(+). Its function is as follows. RuBisCO catalyzes two reactions: the carboxylation of D-ribulose 1,5-bisphosphate, the primary event in carbon dioxide fixation, as well as the oxidative fragmentation of the pentose substrate in the photorespiration process. Both reactions occur simultaneously and in competition at the same active site. This Malus domestica (Apple) protein is Ribulose bisphosphate carboxylase large chain (rbcL).